Consider the following 463-residue polypeptide: MTKIAWQNTKHIVVLGLGKTGVSVLRYLQHKRQQDQKLAEVKIQVFDSRENPPGLEEAKQILGDAELINRHWELEDTLAADLIIASPGIDLREDPVVLARDADIPIVGDVELFAQESKLPIVAVTGSNGKSTVTRMVEFVAKQCGKNVAAAGNIGVPVLDLLLQEQHPDAVILELSSFQLESVSSLKLKAAALMNISADHMDRYCTLDEYVKAKQRIFTHAKTWILNRQQQDTWPHPVTGKLMTFGNDSHPKHFGLLSGNIDRVSGPVAVTFDGSVVLRADQLQLQGIHNLVNVQAALALCQAIDIDIEAAVRAVKEFKGLPHRCELVSDNEGVLWVNDSKATNIGATAAAVEGLRPMINGRLLLIAGGVGKGADFRELQSTLERVDILLTIGEDGPRIGQLFNGSRQVKSLQQAVELAASLVQTGDMVLLSPACASFDQFQNFEHRGDSFRHAVEALYVNSA.

126 to 132 (GSNGKST) contacts ATP.

This sequence belongs to the MurCDEF family.

Its subcellular location is the cytoplasm. The catalysed reaction is UDP-N-acetyl-alpha-D-muramoyl-L-alanine + D-glutamate + ATP = UDP-N-acetyl-alpha-D-muramoyl-L-alanyl-D-glutamate + ADP + phosphate + H(+). Its pathway is cell wall biogenesis; peptidoglycan biosynthesis. Functionally, cell wall formation. Catalyzes the addition of glutamate to the nucleotide precursor UDP-N-acetylmuramoyl-L-alanine (UMA). This is UDP-N-acetylmuramoylalanine--D-glutamate ligase from Idiomarina loihiensis (strain ATCC BAA-735 / DSM 15497 / L2-TR).